The following is a 475-amino-acid chain: Chemotaxis protein MotD (475 aa).

3 disordered regions span residues 1–175, 195–243, and 408–475; these read MRPL…PVGG, LQPE…SEPD, and GDSA…HVYM. Over residues 9 to 22 the composition is skewed to polar residues; it reads RTSAASRPAQSLSV. A compositionally biased stretch (low complexity) spans 79 to 100; that stretch reads ADVPASMADAASPDARPASERA. Over residues 143–155 the composition is skewed to basic and acidic residues; it reads HSRETVHALRDAI. Residues 408-417 are compositionally biased toward gly residues; that stretch reads GDSASGGGGQ. Basic and acidic residues predominate over residues 427–449; sequence EGRERAGDDGQGRQPRDGGRAAT.

It localises to the cytoplasm. Required for the rotation of the flagellar motor. Has a positive effect as flagellar rotation increases when an excess of motd is present. This chain is Chemotaxis protein MotD (motD), found in Rhizobium meliloti (Ensifer meliloti).